Consider the following 510-residue polypeptide: Protein phosphatase 1H (510 aa).

A PPM-type phosphatase domain is found at 73–503 (STGYAEVINA…DDISVYVIPL (431 aa)). 2 disordered regions span residues 105–128 (VQST…EGLQ) and 188–225 (LGEE…PTRF).

Belongs to the PP2C family.

The protein localises to the nucleus. Its subcellular location is the cytoplasm. It carries out the reaction O-phospho-L-seryl-[protein] + H2O = L-seryl-[protein] + phosphate. The catalysed reaction is O-phospho-L-threonyl-[protein] + H2O = L-threonyl-[protein] + phosphate. The chain is Protein phosphatase 1H (ppm1h) from Xenopus tropicalis (Western clawed frog).